Reading from the N-terminus, the 252-residue chain is Aspartate/glutamate leucyltransferase (252 aa).

It belongs to the R-transferase family. Bpt subfamily.

The protein resides in the cytoplasm. It catalyses the reaction N-terminal L-glutamyl-[protein] + L-leucyl-tRNA(Leu) = N-terminal L-leucyl-L-glutamyl-[protein] + tRNA(Leu) + H(+). The enzyme catalyses N-terminal L-aspartyl-[protein] + L-leucyl-tRNA(Leu) = N-terminal L-leucyl-L-aspartyl-[protein] + tRNA(Leu) + H(+). Functionally, functions in the N-end rule pathway of protein degradation where it conjugates Leu from its aminoacyl-tRNA to the N-termini of proteins containing an N-terminal aspartate or glutamate. The protein is Aspartate/glutamate leucyltransferase of Afipia carboxidovorans (strain ATCC 49405 / DSM 1227 / KCTC 32145 / OM5) (Oligotropha carboxidovorans).